A 662-amino-acid chain; its full sequence is Calcium-dependent protease (662 aa).

The 334-residue stretch at Gln-196–Val-529 folds into the Peptidase S8 domain. Catalysis depends on charge relay system residues Asp-233, His-270, and Ser-466. Positions Ala-535–Phe-662 constitute a P/Homo B domain.

Belongs to the peptidase S8 family.

The protein resides in the cytoplasm. Functionally, degrades phycobiliproteins in vitro. Has a substrate specificity similar to that of trypsin. In Nostoc sp. (strain PCC 7120 / SAG 25.82 / UTEX 2576), this protein is Calcium-dependent protease (prcA).